The primary structure comprises 458 residues: Ectonucleotide pyrophosphatase/phosphodiesterase family member 7 (458 aa).

A signal peptide spans 1-21 (MRGPAVLLTVALATLLAPGAG). The Extracellular segment spans residues 22-433 (APVQSQGSQN…RPTLLPKGRS (412 aa)). Residues aspartate 39 and threonine 75 each contribute to the Zn(2+) site. Residues 72–78 (VTMTSPC) are required for enzyme activity. Threonine 75 acts as the Nucleophile in catalysis. Residue asparagine 96 coordinates substrate. N-linked (GlcNAc...) asparagine glycosylation is found at asparagine 100, asparagine 121, asparagine 146, and asparagine 168. The Zn(2+) site is built by aspartate 199, histidine 203, aspartate 246, and histidine 247. Asparagine 267 carries an N-linked (GlcNAc...) asparagine glycan. Residue histidine 353 participates in Zn(2+) binding. Residues 434-454 (ALPPSSRPLLVMGLLGTVILL) form a helical membrane-spanning segment. At 455–458 (SEVA) the chain is on the cytoplasmic side.

Belongs to the nucleotide pyrophosphatase/phosphodiesterase family. It depends on Zn(2+) as a cofactor. Post-translationally, N-glycosylated; required for activity and transport to the plasma membrane. Detected in the colon (at protein level). Expressed in the duodenum, jejunum and liver and at low levels in the ileum. Expression was very low in the esophagus, stomach and colon.

It is found in the cell membrane. It carries out the reaction a sphingomyelin + H2O = phosphocholine + an N-acylsphing-4-enine + H(+). It catalyses the reaction 1-hexadecanoyl-sn-glycero-3-phosphocholine + H2O = 1-hexadecanoyl-sn-glycerol + phosphocholine + H(+). The catalysed reaction is a 1-O-alkyl-2-acetyl-sn-glycero-3-phosphocholine + H2O = a 1-O-alkyl-2-acetyl-sn-glycerol + phosphocholine + H(+). The enzyme catalyses 1-O-octadecyl-2-acetyl-sn-glycero-3-phosphocholine + H2O = 1-O-octadecyl-2-acetyl-sn-glycerol + phosphocholine + H(+). Inhibited in a dose dependent manner by ATP, imidazole, orthovanadate and zinc ion. Not inhibited by ADP, AMP and EDTA. Choline-specific phosphodiesterase that hydrolyzes sphingomyelin releasing the ceramide and phosphocholine and therefore is involved in sphingomyelin digestion, ceramide formation, and fatty acid (FA) absorption in the gastrointestinal tract. Also has phospholipase C activity and can also cleave phosphocholine from palmitoyl lyso-phosphatidylcholine and platelet-activating factor (PAF) leading to its inactivation. Does not have nucleotide pyrophosphatase activity. May promote cholesterol absorption by affecting the levels of sphingomyelin derived from either diet or endogenous sources, in the intestinal lumen. This is Ectonucleotide pyrophosphatase/phosphodiesterase family member 7 from Homo sapiens (Human).